The following is a 475-amino-acid chain: Ribulose bisphosphate carboxylase large chain (475 aa).

Positions 1–2 (MS) are excised as a propeptide. Residue proline 3 is modified to N-acetylproline. Position 14 is an N6,N6,N6-trimethyllysine (lysine 14). Substrate is bound by residues asparagine 123 and threonine 173. Lysine 175 functions as the Proton acceptor in the catalytic mechanism. Lysine 177 is a substrate binding site. The Mg(2+) site is built by lysine 201, aspartate 203, and glutamate 204. Lysine 201 bears the N6-carboxylysine mark. Histidine 294 acts as the Proton acceptor in catalysis. Residues arginine 295, histidine 327, and serine 379 each coordinate substrate.

Belongs to the RuBisCO large chain family. Type I subfamily. As to quaternary structure, heterohexadecamer of 8 large chains and 8 small chains; disulfide-linked. The disulfide link is formed within the large subunit homodimers. Requires Mg(2+) as cofactor. Post-translationally, the disulfide bond which can form in the large chain dimeric partners within the hexadecamer appears to be associated with oxidative stress and protein turnover.

The protein resides in the plastid. It localises to the chloroplast. It carries out the reaction 2 (2R)-3-phosphoglycerate + 2 H(+) = D-ribulose 1,5-bisphosphate + CO2 + H2O. It catalyses the reaction D-ribulose 1,5-bisphosphate + O2 = 2-phosphoglycolate + (2R)-3-phosphoglycerate + 2 H(+). Its function is as follows. RuBisCO catalyzes two reactions: the carboxylation of D-ribulose 1,5-bisphosphate, the primary event in carbon dioxide fixation, as well as the oxidative fragmentation of the pentose substrate in the photorespiration process. Both reactions occur simultaneously and in competition at the same active site. This is Ribulose bisphosphate carboxylase large chain from Pinus krempfii (Krempf's pine).